Reading from the N-terminus, the 673-residue chain is Metal-nicotianamine transporter YSL1 (673 aa).

Positions 1–13 (MEIEQRRIMKREG) are enriched in basic and acidic residues. The interval 1–39 (MEIEQRRIMKREGEEEEDNNQLSLQEEEPDTEEEMSGRT) is disordered. Over residues 14-34 (EEEEDNNQLSLQEEEPDTEEE) the composition is skewed to acidic residues. Transmembrane regions (helical) follow at residues 46–66 (QITV…SVIA), 71–91 (LTTG…FVFV), 119–139 (SAVA…LLGL), 163–183 (GLGW…FVLI), 225–245 (FMKY…FSGI), 260–280 (AWKQ…GMIC), 283–303 (LVNL…WPLL), 328–348 (VFLS…KILF), 392–412 (FAVS…PLIF), 420–440 (VIVA…GAGL), 442–462 (DINM…AVTG), 467–487 (VVAG…SCIL), 510–530 (IGTV…YKAF), 558–578 (FSAL…FAVL), 604–624 (FLVG…VFVW), and 642–662 (GLIC…LAGV).

Belongs to the YSL (TC 2.A.67.2) family. In terms of tissue distribution, low levels of expression in leaves and shoots, but not detected in roots. Restricted to the vasculature, in the xylem parenchyma surrounding xylem tubes. Expressed in pollen grains, in the vasculature of petals and sepals, in the carpel veins, in the style underneath the stigmatic papillae, in the vascular tissue of the funiculus and in the chalazal endosperm.

Its subcellular location is the membrane. Functionally, involved in iron loading of the seeds. Acts probably as a transporter of iron- and metal-nicotianamine chelates. The protein is Metal-nicotianamine transporter YSL1 (YSL1) of Arabidopsis thaliana (Mouse-ear cress).